A 535-amino-acid polypeptide reads, in one-letter code: Pentatricopeptide repeat-containing protein At5g16420, mitochondrial (535 aa).

Residues 1-28 (MFLSRVNPTRFPPFVASRRLFSASASAA) constitute a mitochondrion transit peptide. PPR repeat units lie at residues 82–112 (NYDT…LRNS), 119–153 (GENL…GVKR), 154–189 (SVRS…GITP), 190–224 (NIFT…GLVP), 225–259 (NLVT…GWYP), 260–294 (DATT…EIEP), 295–329 (NEVT…SFMP), 330–364 (DSSL…NCMP), 365–395 (DNAL…FEKG), 399–433 (SLLT…KCKP), 434–468 (NAFT…GCFP), and 469–503 (NKTT…GKVD).

The protein belongs to the PPR family. P subfamily.

It localises to the mitochondrion. This Arabidopsis thaliana (Mouse-ear cress) protein is Pentatricopeptide repeat-containing protein At5g16420, mitochondrial.